Here is a 385-residue protein sequence, read N- to C-terminus: Centrosomal protein of 44 kDa (385 aa).

The tract at residues 11 to 191 is binds with microtubules and centrioles; it reads RKLEQRLRTL…TKCYKSALLE (181 aa). Residues 194 to 204 show a composition bias toward acidic residues; the sequence is EEEEPTSDCEE. The interval 194-224 is disordered; it reads EEEEPTSDCEEDSHLQREMGSPFETAEETPN. 2 coiled-coil regions span residues 224–263 and 353–379; these read NSEQ…KGKI and TEES…ELLK.

In terms of assembly, binds to centriolar microtubules.

Its subcellular location is the cytoplasm. The protein resides in the cytoskeleton. The protein localises to the microtubule organizing center. It localises to the centrosome. It is found in the centriole. Its subcellular location is the spindle pole. The protein resides in the midbody. Functionally, centriole-enriched microtubule-binding protein involved in centriole biogenesis. In collaboration with CEP295 and POC1B, is required for the centriole-to-centrosome conversion by ensuring the formation of bona fide centriole wall. Functions as a linker component that maintains centrosome cohesion. Associates with CROCC and regulates its stability and localization to the centrosome. In Xenopus tropicalis (Western clawed frog), this protein is Centrosomal protein of 44 kDa (cep44).